Here is a 377-residue protein sequence, read N- to C-terminus: Subtilisin-like protease CPC735_012930 (377 aa).

The signal sequence occupies residues 1–20 (MSILFKIFASTLAVVSVVNA). Positions 21–118 (GELLNFENER…VEPDRMASAT (98 aa)) are excised as a propeptide. The Inhibitor I9 domain maps to 36–114 (SYIVVMKDGT…HVKYVEPDRM (79 aa)). Positions 128-377 (SWGLGRISHT…NKLLYNKSGF (250 aa)) constitute a Peptidase S8 domain. Active-site charge relay system residues include aspartate 160 and histidine 191. N-linked (GlcNAc...) asparagine glycosylation occurs at asparagine 252. Serine 323 (charge relay system) is an active-site residue. N-linked (GlcNAc...) asparagine glycans are attached at residues asparagine 364 and asparagine 373.

Belongs to the peptidase S8 family.

The protein resides in the secreted. Its function is as follows. Secreted subtilisin-like serine protease with keratinolytic activity that contributes to pathogenicity. The polypeptide is Subtilisin-like protease CPC735_012930 (Coccidioides posadasii (strain C735) (Valley fever fungus)).